Consider the following 140-residue polypeptide: Nucleoside diphosphate kinase (140 aa).

Residues lysine 11, phenylalanine 59, arginine 87, threonine 93, arginine 104, and asparagine 114 each contribute to the ATP site. Histidine 117 serves as the catalytic Pros-phosphohistidine intermediate.

The protein belongs to the NDK family. As to quaternary structure, homotetramer. Requires Mg(2+) as cofactor.

The protein localises to the cytoplasm. The catalysed reaction is a 2'-deoxyribonucleoside 5'-diphosphate + ATP = a 2'-deoxyribonucleoside 5'-triphosphate + ADP. It catalyses the reaction a ribonucleoside 5'-diphosphate + ATP = a ribonucleoside 5'-triphosphate + ADP. In terms of biological role, major role in the synthesis of nucleoside triphosphates other than ATP. The ATP gamma phosphate is transferred to the NDP beta phosphate via a ping-pong mechanism, using a phosphorylated active-site intermediate. The protein is Nucleoside diphosphate kinase of Ruegeria pomeroyi (strain ATCC 700808 / DSM 15171 / DSS-3) (Silicibacter pomeroyi).